We begin with the raw amino-acid sequence, 227 residues long: Cytochrome c oxidase subunit 2 (227 aa).

At 1–14 (MAHAAQVGLQDATS) the chain is on the mitochondrial intermembrane side. A helical membrane pass occupies residues 15–45 (PIMEELITFHDHALMIIFLICFLVLYALFLT). Residues 46-59 (LTTKLTNTNISDAQ) are Mitochondrial matrix-facing. The helical transmembrane segment at 60–87 (EMETVWTILPAIILVLIALPSLRILYMT) threads the bilayer. The Mitochondrial intermembrane segment spans residues 88-227 (DEVNDPSLTI…IFEMGPVFTL (140 aa)). Cu cation contacts are provided by His-161, Cys-196, Glu-198, Cys-200, His-204, and Met-207. A Mg(2+)-binding site is contributed by Glu-198.

It belongs to the cytochrome c oxidase subunit 2 family. As to quaternary structure, component of the cytochrome c oxidase (complex IV, CIV), a multisubunit enzyme composed of 14 subunits. The complex is composed of a catalytic core of 3 subunits MT-CO1, MT-CO2 and MT-CO3, encoded in the mitochondrial DNA, and 11 supernumerary subunits COX4I1 (or COX4I2), COX5A, COX5B, COX6A1 (or COX6A2), COX6B1 (or COX6B2), COX6C, COX7A2 (or COX7A1), COX7B, COX7C, COX8A and NDUFA4, which are encoded in the nuclear genome. The complex exists as a monomer or a dimer and forms supercomplexes (SCs) in the inner mitochondrial membrane with NADH-ubiquinone oxidoreductase (complex I, CI) and ubiquinol-cytochrome c oxidoreductase (cytochrome b-c1 complex, complex III, CIII), resulting in different assemblies (supercomplex SCI(1)III(2)IV(1) and megacomplex MCI(2)III(2)IV(2)). Found in a complex with TMEM177, COA6, COX18, COX20, SCO1 and SCO2. Interacts with TMEM177 in a COX20-dependent manner. Interacts with COX20. Interacts with COX16. The cofactor is Cu cation.

It is found in the mitochondrion inner membrane. It carries out the reaction 4 Fe(II)-[cytochrome c] + O2 + 8 H(+)(in) = 4 Fe(III)-[cytochrome c] + 2 H2O + 4 H(+)(out). Component of the cytochrome c oxidase, the last enzyme in the mitochondrial electron transport chain which drives oxidative phosphorylation. The respiratory chain contains 3 multisubunit complexes succinate dehydrogenase (complex II, CII), ubiquinol-cytochrome c oxidoreductase (cytochrome b-c1 complex, complex III, CIII) and cytochrome c oxidase (complex IV, CIV), that cooperate to transfer electrons derived from NADH and succinate to molecular oxygen, creating an electrochemical gradient over the inner membrane that drives transmembrane transport and the ATP synthase. Cytochrome c oxidase is the component of the respiratory chain that catalyzes the reduction of oxygen to water. Electrons originating from reduced cytochrome c in the intermembrane space (IMS) are transferred via the dinuclear copper A center (CU(A)) of subunit 2 and heme A of subunit 1 to the active site in subunit 1, a binuclear center (BNC) formed by heme A3 and copper B (CU(B)). The BNC reduces molecular oxygen to 2 water molecules using 4 electrons from cytochrome c in the IMS and 4 protons from the mitochondrial matrix. The sequence is that of Cytochrome c oxidase subunit 2 (MT-CO2) from Homo sapiens (Human).